The sequence spans 566 residues: Proline--tRNA ligase (566 aa).

Belongs to the class-II aminoacyl-tRNA synthetase family. ProS type 1 subfamily. Homodimer.

Its subcellular location is the cytoplasm. The enzyme catalyses tRNA(Pro) + L-proline + ATP = L-prolyl-tRNA(Pro) + AMP + diphosphate. In terms of biological role, catalyzes the attachment of proline to tRNA(Pro) in a two-step reaction: proline is first activated by ATP to form Pro-AMP and then transferred to the acceptor end of tRNA(Pro). As ProRS can inadvertently accommodate and process non-cognate amino acids such as alanine and cysteine, to avoid such errors it has two additional distinct editing activities against alanine. One activity is designated as 'pretransfer' editing and involves the tRNA(Pro)-independent hydrolysis of activated Ala-AMP. The other activity is designated 'posttransfer' editing and involves deacylation of mischarged Ala-tRNA(Pro). The misacylated Cys-tRNA(Pro) is not edited by ProRS. The protein is Proline--tRNA ligase of Bacillus cytotoxicus (strain DSM 22905 / CIP 110041 / 391-98 / NVH 391-98).